The primary structure comprises 155 residues: Ribosome maturation factor RimP (155 aa).

This sequence belongs to the RimP family.

It localises to the cytoplasm. Required for maturation of 30S ribosomal subunits. This Prochlorococcus marinus (strain MIT 9312) protein is Ribosome maturation factor RimP.